Reading from the N-terminus, the 61-residue chain is Photosystem II reaction center X protein (61 aa).

The helical transmembrane segment at 26-46 (IGSFIAAALLIVIPATAFLIF) threads the bilayer.

Belongs to the PsbX family. Type 2 subfamily. In terms of assembly, PSII consists of a core antenna complex that captures photons, and an electron transfer chain that converts photonic excitation into a charge separation. PSII forms dimeric complexes.

It is found in the cellular thylakoid membrane. Its function is as follows. Involved in the binding and/or turnover of quinones at the Q(B) site of Photosystem II. This chain is Photosystem II reaction center X protein, found in Prochlorococcus marinus (strain MIT 9215).